The following is a 390-amino-acid chain: MTPFHHPWGELCLQRWPRRRNETLQAWDNADLYLLNTLAERGQALGNGDNAPKTLVLNDQQGALCLALQQAAASALDIESSGDSYTAAAAARANAVDNGLDPNLLFCWPLDAPKQSPDQVIMRVPKSIALLQWQLQWLSGHLPKGVPIWLAGMDKHLPRQLVPLMQRYLGNGRAEYGWKKARLFSAQAPGRVLADTDYPCRVDALQWRLTVHAGVFAQQQLDIGARFFLDHLPEALHTGAKVADLGCGNGVIGMAVLKANPAARVTFCDESWLALESARDNVSRYFSDAESHFHLGDGLAGLEQRFDCILLNPPFHDGYVVGDHVARRLFNQAATALVPGGELRVIGNRHLGYHKVLARRFTSVTVLASNAKFVVWRCQGPTPSASNPLD.

This sequence belongs to the methyltransferase superfamily. RlmG family.

Its subcellular location is the cytoplasm. The catalysed reaction is guanosine(1835) in 23S rRNA + S-adenosyl-L-methionine = N(2)-methylguanosine(1835) in 23S rRNA + S-adenosyl-L-homocysteine + H(+). Its function is as follows. Specifically methylates the guanine in position 1835 (m2G1835) of 23S rRNA. This is Ribosomal RNA large subunit methyltransferase G from Alcanivorax borkumensis (strain ATCC 700651 / DSM 11573 / NCIMB 13689 / SK2).